The chain runs to 241 residues: Phosphoribosylaminoimidazole-succinocarboxamide synthase (241 aa).

This sequence belongs to the SAICAR synthetase family.

It carries out the reaction 5-amino-1-(5-phospho-D-ribosyl)imidazole-4-carboxylate + L-aspartate + ATP = (2S)-2-[5-amino-1-(5-phospho-beta-D-ribosyl)imidazole-4-carboxamido]succinate + ADP + phosphate + 2 H(+). The protein operates within purine metabolism; IMP biosynthesis via de novo pathway; 5-amino-1-(5-phospho-D-ribosyl)imidazole-4-carboxamide from 5-amino-1-(5-phospho-D-ribosyl)imidazole-4-carboxylate: step 1/2. The protein is Phosphoribosylaminoimidazole-succinocarboxamide synthase of Oenococcus oeni (strain ATCC BAA-331 / PSU-1).